A 476-amino-acid chain; its full sequence is ATP synthase subunit beta (476 aa).

161–168 (GGAGVGKT) serves as a coordination point for ATP.

The protein belongs to the ATPase alpha/beta chains family. In terms of assembly, F-type ATPases have 2 components, CF(1) - the catalytic core - and CF(0) - the membrane proton channel. CF(1) has five subunits: alpha(3), beta(3), gamma(1), delta(1), epsilon(1). CF(0) has three main subunits: a(1), b(2) and c(9-12). The alpha and beta chains form an alternating ring which encloses part of the gamma chain. CF(1) is attached to CF(0) by a central stalk formed by the gamma and epsilon chains, while a peripheral stalk is formed by the delta and b chains.

The protein localises to the cell membrane. The catalysed reaction is ATP + H2O + 4 H(+)(in) = ADP + phosphate + 5 H(+)(out). Its function is as follows. Produces ATP from ADP in the presence of a proton gradient across the membrane. The catalytic sites are hosted primarily by the beta subunits. This is ATP synthase subunit beta from Mycolicibacterium gilvum (strain PYR-GCK) (Mycobacterium gilvum (strain PYR-GCK)).